A 180-amino-acid polypeptide reads, in one-letter code: Acireductone dioxygenase (180 aa).

Residues H97, H99, E103, and H141 each contribute to the Fe(2+) site. 4 residues coordinate Ni(2+): H97, H99, E103, and H141.

It belongs to the acireductone dioxygenase (ARD) family. As to quaternary structure, monomer. The cofactor is Fe(2+). Requires Mg(2+) as cofactor. It depends on Ni(2+) as a cofactor. Mn(2+) is required as a cofactor. Co(2+) serves as cofactor.

The enzyme catalyses 1,2-dihydroxy-5-(methylsulfanyl)pent-1-en-3-one + O2 = 3-(methylsulfanyl)propanoate + CO + formate + 2 H(+). The catalysed reaction is 1,2-dihydroxy-5-(methylsulfanyl)pent-1-en-3-one + O2 = 4-methylsulfanyl-2-oxobutanoate + formate + 2 H(+). It functions in the pathway amino-acid biosynthesis; L-methionine biosynthesis via salvage pathway; L-methionine from S-methyl-5-thio-alpha-D-ribose 1-phosphate: step 5/6. Its function is as follows. Catalyzes 2 different reactions between oxygen and the acireductone 1,2-dihydroxy-3-keto-5-methylthiopentene (DHK-MTPene) depending upon the metal bound in the active site. Fe-containing acireductone dioxygenase (Fe-ARD) produces formate and 2-keto-4-methylthiobutyrate (KMTB), the alpha-ketoacid precursor of methionine in the methionine recycle pathway. Ni-containing acireductone dioxygenase (Ni-ARD) produces methylthiopropionate, carbon monoxide and formate, and does not lie on the methionine recycle pathway. The sequence is that of Acireductone dioxygenase (mtnD) from Klebsiella oxytoca.